Reading from the N-terminus, the 256-residue chain is Imidazole glycerol phosphate synthase subunit HisF (256 aa).

Residues Asp12 and Asp131 contribute to the active site.

This sequence belongs to the HisA/HisF family. As to quaternary structure, heterodimer of HisH and HisF.

It is found in the cytoplasm. It catalyses the reaction 5-[(5-phospho-1-deoxy-D-ribulos-1-ylimino)methylamino]-1-(5-phospho-beta-D-ribosyl)imidazole-4-carboxamide + L-glutamine = D-erythro-1-(imidazol-4-yl)glycerol 3-phosphate + 5-amino-1-(5-phospho-beta-D-ribosyl)imidazole-4-carboxamide + L-glutamate + H(+). The protein operates within amino-acid biosynthesis; L-histidine biosynthesis; L-histidine from 5-phospho-alpha-D-ribose 1-diphosphate: step 5/9. IGPS catalyzes the conversion of PRFAR and glutamine to IGP, AICAR and glutamate. The HisF subunit catalyzes the cyclization activity that produces IGP and AICAR from PRFAR using the ammonia provided by the HisH subunit. This Pseudomonas fluorescens (strain SBW25) protein is Imidazole glycerol phosphate synthase subunit HisF.